The chain runs to 340 residues: 3-isopropylmalate dehydrogenase (340 aa).

Substrate is bound by residues Arg88, Arg98, Arg122, and Asp212. Residues Asp212, Asp236, and Asp240 each coordinate Mg(2+). 272-284 contacts NAD(+); that stretch reads GSAPDIMGKGIAD.

It belongs to the isocitrate and isopropylmalate dehydrogenases family. LeuB type 2 subfamily. In terms of assembly, homodimer. Mg(2+) is required as a cofactor. It depends on Mn(2+) as a cofactor.

It is found in the cytoplasm. It carries out the reaction (2R,3S)-3-isopropylmalate + NAD(+) = 4-methyl-2-oxopentanoate + CO2 + NADH. It participates in amino-acid biosynthesis; L-leucine biosynthesis; L-leucine from 3-methyl-2-oxobutanoate: step 3/4. Catalyzes the oxidation of 3-carboxy-2-hydroxy-4-methylpentanoate (3-isopropylmalate) to 3-carboxy-4-methyl-2-oxopentanoate. The product decarboxylates to 4-methyl-2 oxopentanoate. The polypeptide is 3-isopropylmalate dehydrogenase (Corynebacterium efficiens (strain DSM 44549 / YS-314 / AJ 12310 / JCM 11189 / NBRC 100395)).